Here is a 165-residue protein sequence, read N- to C-terminus: Regulator of ribonuclease activity A (165 aa).

Belongs to the RraA family. In terms of assembly, homotrimer. Binds to both RNA-binding sites in the C-terminal region of Rne and to RhlB.

The protein resides in the cytoplasm. Functionally, globally modulates RNA abundance by binding to RNase E (Rne) and regulating its endonucleolytic activity. Can modulate Rne action in a substrate-dependent manner by altering the composition of the degradosome. Modulates RNA-binding and helicase activities of the degradosome. This is Regulator of ribonuclease activity A from Actinobacillus pleuropneumoniae serotype 7 (strain AP76).